The following is a 648-amino-acid chain: Bifunctional protein TilS/HprT (648 aa).

29 to 34 (SGGPDS) is an ATP binding site. D627 contacts Mg(2+).

This sequence in the N-terminal section; belongs to the tRNA(Ile)-lysidine synthase family. It in the C-terminal section; belongs to the purine/pyrimidine phosphoribosyltransferase family. The cofactor is Mg(2+).

Its subcellular location is the cytoplasm. It catalyses the reaction IMP + diphosphate = hypoxanthine + 5-phospho-alpha-D-ribose 1-diphosphate. It carries out the reaction GMP + diphosphate = guanine + 5-phospho-alpha-D-ribose 1-diphosphate. The enzyme catalyses cytidine(34) in tRNA(Ile2) + L-lysine + ATP = lysidine(34) in tRNA(Ile2) + AMP + diphosphate + H(+). Functionally, ligates lysine onto the cytidine present at position 34 of the AUA codon-specific tRNA(Ile) that contains the anticodon CAU, in an ATP-dependent manner. Cytidine is converted to lysidine, thus changing the amino acid specificity of the tRNA from methionine to isoleucine. The protein is Bifunctional protein TilS/HprT (tilS/hprT) of Listeria innocua serovar 6a (strain ATCC BAA-680 / CLIP 11262).